A 1238-amino-acid chain; its full sequence is Lysine-specific demethylase JMJ703 (1238 aa).

A disordered region spans residues 56–79 (EECQPSAAVSRSDTPCSTSGTQTC). Positions 62 to 79 (AAVSRSDTPCSTSGTQTC) are enriched in polar residues. The JmjN domain occupies 154–195 (APVFYPTEEEFEDTLKYIESIRPMAEPYGICRIVPPSSWKPP). The tract at residues 215 to 266 (KVDKLQNRKSSKKGRRGGMMKRRKLAESEENSATAHTQTGMQQSPERFGFEP) is disordered. The span at 221–238 (NRKSSKKGRRGGMMKRRK) shows a compositional bias: basic residues. The span at 245 to 259 (NSATAHTQTGMQQSP) shows a compositional bias: polar residues. Positions 348–514 (KYAQSGWNLN…IGHNAVELYR (167 aa)) constitute a JmjC domain. 3 residues coordinate Fe cation: His394, Glu396, and His482. Disordered stretches follow at residues 699 to 725 (GPRRSYMSQASAVSLVSSSTSNEQKDE), 777 to 798 (YNGGLGGHKGSAPGLPVSSSPS), 834 to 863 (TGDSRSLLGEHHNRSPAMIHDGTNMKSSLE), and 910 to 978 (ASSQ…LQRT). Low complexity predominate over residues 706–719 (SQASAVSLVSSSTS). Polar residues predominate over residues 910 to 923 (ASSQQFVRTGPWTQ). The segment covering 924–936 (SASHEASSPSTSA) has biased composition (low complexity). Polar residues predominate over residues 964–978 (SFSNQQPNDGRLQRT). Residues 1019 to 1077 (VVHRFKCSVEPLEIGVVLSGRLWSSSQAIFPKGFRSRVKYFSIVDPIQMAYYISEILDA) form the FYR N-terminal domain. One can recognise an FYR C-terminal domain in the interval 1079–1169 (MQGPLFMVKL…HICTEYWRSR (91 aa)).

Fe(2+) is required as a cofactor. As to expression, expressed in roots, leaf sheaths, stems and panicles.

The protein localises to the nucleus. The enzyme catalyses N(6),N(6),N(6)-trimethyl-L-lysyl(4)-[histone H3] + 3 2-oxoglutarate + 3 O2 = L-lysyl(4)-[histone H3] + 3 formaldehyde + 3 succinate + 3 CO2. Functionally, histone demethylase that demethylates 'Lys-4' (H3K4me) of histone H3 with a specific activity for H3K4me3, H3K4me2 and H3K4me1. No activity on H3K9me3/2/1, H3K27me3/2/1 and H3K36me3/2/1. Involved in the control of stem elongation by regulating methylation states of H3K4me3 on cytokinin oxidase (CKX) gene family, which may cause increased expression of CKX genes and reduced cytokinin levels. Prevents ectopic retrotransposition by regulating the levels of H3K4me3 in two non-LTR retrotransposons KARMA and LINE-1 (L1) and reinforcing their repressed states. The protein is Lysine-specific demethylase JMJ703 (JMJ703) of Oryza sativa subsp. japonica (Rice).